Here is a 333-residue protein sequence, read N- to C-terminus: Ornithine carbamoyltransferase (333 aa).

Carbamoyl phosphate is bound by residues Ser-56 to Thr-59, Arg-107, and His-134 to Gln-137. L-ornithine is bound by residues Asn-167, Asp-231, and Ser-235–Met-236. Residues Cys-273 to Leu-274 and Arg-318 each bind carbamoyl phosphate.

This sequence belongs to the aspartate/ornithine carbamoyltransferase superfamily. OTCase family.

Its subcellular location is the cytoplasm. It carries out the reaction carbamoyl phosphate + L-ornithine = L-citrulline + phosphate + H(+). It participates in amino-acid degradation; L-arginine degradation via ADI pathway; carbamoyl phosphate from L-arginine: step 2/2. Reversibly catalyzes the transfer of the carbamoyl group from carbamoyl phosphate (CP) to the N(epsilon) atom of ornithine (ORN) to produce L-citrulline. This Clostridium botulinum (strain Langeland / NCTC 10281 / Type F) protein is Ornithine carbamoyltransferase.